Consider the following 395-residue polypeptide: Phosphoglycerate kinase (395 aa).

Residues 21–23, Arg-36, 59–62, Arg-120, and Arg-153 contribute to the substrate site; these read DFN and HLGR. ATP contacts are provided by residues Lys-203, Glu-325, and 351–354; that span reads GGDS.

The protein belongs to the phosphoglycerate kinase family. As to quaternary structure, monomer.

Its subcellular location is the cytoplasm. It catalyses the reaction (2R)-3-phosphoglycerate + ATP = (2R)-3-phospho-glyceroyl phosphate + ADP. The protein operates within carbohydrate degradation; glycolysis; pyruvate from D-glyceraldehyde 3-phosphate: step 2/5. The protein is Phosphoglycerate kinase of Roseiflexus sp. (strain RS-1).